The primary structure comprises 90 residues: UPF0335 protein bsl7135 (90 aa).

The protein belongs to the UPF0335 family.

The sequence is that of UPF0335 protein bsl7135 from Bradyrhizobium diazoefficiens (strain JCM 10833 / BCRC 13528 / IAM 13628 / NBRC 14792 / USDA 110).